We begin with the raw amino-acid sequence, 201 residues long: 3-isopropylmalate dehydratase small subunit (201 aa).

The protein belongs to the LeuD family. LeuD type 1 subfamily. In terms of assembly, heterodimer of LeuC and LeuD.

It catalyses the reaction (2R,3S)-3-isopropylmalate = (2S)-2-isopropylmalate. It participates in amino-acid biosynthesis; L-leucine biosynthesis; L-leucine from 3-methyl-2-oxobutanoate: step 2/4. Functionally, catalyzes the isomerization between 2-isopropylmalate and 3-isopropylmalate, via the formation of 2-isopropylmaleate. The protein is 3-isopropylmalate dehydratase small subunit of Rhodopseudomonas palustris (strain BisA53).